Consider the following 179-residue polypeptide: Large ribosomal subunit protein uL5 (179 aa).

The protein belongs to the universal ribosomal protein uL5 family. Part of the 50S ribosomal subunit; part of the 5S rRNA/L5/L18/L25 subcomplex. Contacts the 5S rRNA and the P site tRNA. Forms a bridge to the 30S subunit in the 70S ribosome.

This is one of the proteins that bind and probably mediate the attachment of the 5S RNA into the large ribosomal subunit, where it forms part of the central protuberance. In the 70S ribosome it contacts protein S13 of the 30S subunit (bridge B1b), connecting the 2 subunits; this bridge is implicated in subunit movement. Contacts the P site tRNA; the 5S rRNA and some of its associated proteins might help stabilize positioning of ribosome-bound tRNAs. This Staphylococcus aureus (strain MW2) protein is Large ribosomal subunit protein uL5.